Here is a 655-residue protein sequence, read N- to C-terminus: Serine/threonine-protein kinase SKM1 (655 aa).

Residues 3–118 form the PH domain; sequence GVKKEGWISY…WLDAIFAKCP (116 aa). The CRIB domain occupies 123-136; sequence VSSPTNFTHKVHVG. Composition is skewed to basic and acidic residues over residues 265-276 and 318-327; these read EEGRVHVSKEST and KNHDSKTKWH. The segment at 265–327 is disordered; sequence EEGRVHVSKE…KNHDSKTKWH (63 aa). Residues 360–639 form the Protein kinase domain; the sequence is FQLVEKAGQG…VRKLLTFEFL (280 aa). Residues 366–374 and K406 each bind ATP; that span reads AGQGASGAV. D507 functions as the Proton acceptor in the catalytic mechanism.

This sequence belongs to the protein kinase superfamily. STE Ser/Thr protein kinase family. STE20 subfamily.

It catalyses the reaction L-seryl-[protein] + ATP = O-phospho-L-seryl-[protein] + ADP + H(+). It carries out the reaction L-threonyl-[protein] + ATP = O-phospho-L-threonyl-[protein] + ADP + H(+). Its function is as follows. May be involved in cellular signaling or cytoskeletal functions. May play a role in morphogenetic control. This chain is Serine/threonine-protein kinase SKM1 (SKM1), found in Saccharomyces cerevisiae (strain ATCC 204508 / S288c) (Baker's yeast).